The following is a 161-amino-acid chain: Cyclic pyranopterin monophosphate synthase (161 aa).

Residues 75 to 77 (MCH) and 115 to 116 (ME) contribute to the substrate site. Asp130 is an active-site residue.

The protein belongs to the MoaC family. Homohexamer; trimer of dimers.

The enzyme catalyses (8S)-3',8-cyclo-7,8-dihydroguanosine 5'-triphosphate = cyclic pyranopterin phosphate + diphosphate. Its pathway is cofactor biosynthesis; molybdopterin biosynthesis. Catalyzes the conversion of (8S)-3',8-cyclo-7,8-dihydroguanosine 5'-triphosphate to cyclic pyranopterin monophosphate (cPMP). The chain is Cyclic pyranopterin monophosphate synthase from Bacillus thuringiensis subsp. konkukian (strain 97-27).